Reading from the N-terminus, the 432-residue chain is MEEGCSTLVRSLEQKYLDDDEDIVQDIIFTGFTGCSPCKMASQRALELLVLNNMNIDTIGDSEKLATLASHVSEADLGWNQISKWSDIACILKNLPHLRVLNIGHNPLNPVIDHELPVSTLHTIILNGTHLPFKTLQSFLSVLPKVTELHMSDNQFNDDDDCDEPISTTVRTVHLNRCGFLKWSSVMNVVKRFPNVCSVFVCENPLKDVTHCKHFEQLPFWNFLNLAKTSIDSWDSLDQLNRMTSISDLRVPNIPLLDALTNEERLHLIIGRLHHLRVLNGSKISSEQREQSERFFIRYYQEQKEKPLQYKTLIDKHGNLEKLVTIDLTPKKEAVVKILCEEKEVNQEITISLEPTVLDFMKILDPKVGVKFTRMKLFLLREDGRTDDFSSSDYNMPLHYFKIEDGDSFLVQEKIIVTRRRRPPSSTSSSSS.

LRR repeat units lie at residues 69 to 94 (ASHVSEADLGWNQISKWSDIACILKN), 95 to 117 (LPHLRVLNIGHNPLNPVIDHELP), 118 to 140 (VSTLHTIILNGTHLPFKTLQSFL), 143 to 167 (LPKVTELHMSDNQFNDDDDCDEPIS), 168 to 191 (TTVRTVHLNRCGFLKWSSVMNVVK), 193 to 217 (FPNVCSVFVCENPLKDVTHCKHFEQ), and 218 to 242 (LPFWNFLNLAKTSIDSWDSLDQLNR). The segment at 254–295 (IPLLDALTNEERLHLIIGRLHHLRVLNGSKISSEQREQSERF) is LRRCT. The segment at 324–415 (VTIDLTPKKE…GDSFLVQEKI (92 aa)) is ubiquitin-like (UBL).

It localises to the cytoplasm. The protein localises to the cytoskeleton. Functionally, acts as a regulator of tubulin stability. Involved in microtubule-dependent neuronal function. May be involved in tubulin acetylation/deacetylation pathway. This Caenorhabditis elegans protein is Tubulin-specific chaperone cofactor E-like protein.